The chain runs to 158 residues: MVELLGIIRIRGWAKAPWYINETLNMLRLRYNFNTMVYPKTSQILGMLNKVSPYITWGEIDPDTLKLLIINRLETVKGDKVSDSYVKEVLKIENIDAMVKQLYEGKIYLHKLDEYFKLPIRLHPPRGGFKGSVKRPYKNKGEFGYRGDKINELMRRMV.

Belongs to the universal ribosomal protein uL30 family. Part of the 50S ribosomal subunit.

The chain is Large ribosomal subunit protein uL30 from Saccharolobus solfataricus (strain ATCC 35092 / DSM 1617 / JCM 11322 / P2) (Sulfolobus solfataricus).